Consider the following 301-residue polypeptide: D-psicose 3-epimerase (301 aa).

Tyr-16 lines the substrate pocket. The Proton donor/acceptor role is filled by Glu-162. Glu-162 provides a ligand contact to Mn(2+). Residues Glu-168 and 195-198 (DTFH) each bind substrate. Asp-195 and His-221 together coordinate Mn(2+). Arg-227 contacts substrate. The active-site Proton donor/acceptor is Glu-256. Glu-256 contributes to the Mn(2+) binding site.

Belongs to the hyi family. In terms of assembly, homotetramer. The cofactor is Mn(2+). Requires Co(2+) as cofactor.

It catalyses the reaction D-allulose = keto-D-fructose. Its activity is regulated as follows. Completely inhibited by EDTA and partially inhibited by Zn(2+), Mg(2+) and Cu(2+). Involved in the biosynthesis of D-psicose. Catalyzes the reversible epimerization of D-fructose at the C3 position to yield D-psicose. The enzyme is highly specific for D-psicose and shows very low activity with D-tagatose. The protein is D-psicose 3-epimerase of Enterocloster bolteae (strain ATCC BAA-613 / DSM 15670 / CCUG 46953 / JCM 12243 / WAL 16351) (Clostridium bolteae).